The following is a 251-amino-acid chain: Aspartate/glutamate leucyltransferase (251 aa).

The protein belongs to the R-transferase family. Bpt subfamily.

Its subcellular location is the cytoplasm. The enzyme catalyses N-terminal L-glutamyl-[protein] + L-leucyl-tRNA(Leu) = N-terminal L-leucyl-L-glutamyl-[protein] + tRNA(Leu) + H(+). It catalyses the reaction N-terminal L-aspartyl-[protein] + L-leucyl-tRNA(Leu) = N-terminal L-leucyl-L-aspartyl-[protein] + tRNA(Leu) + H(+). Functionally, functions in the N-end rule pathway of protein degradation where it conjugates Leu from its aminoacyl-tRNA to the N-termini of proteins containing an N-terminal aspartate or glutamate. The polypeptide is Aspartate/glutamate leucyltransferase (Xanthomonas euvesicatoria pv. vesicatoria (strain 85-10) (Xanthomonas campestris pv. vesicatoria)).